The sequence spans 198 residues: Holliday junction branch migration complex subunit RuvA (198 aa).

The domain I stretch occupies residues 1–63 (MYDYIKGQLT…EDAHLLFGFH (63 aa)). The tract at residues 64–142 (TEDEKDVFLK…EAPQETGHTK (79 aa)) is domain II. A flexible linker region spans residues 143–147 (ARSNK). The tract at residues 148-198 (AGNTQLDEAIEALLALGYKAKELKKIRAFFEGTSETAEQYIKSALKLLMKG) is domain III.

This sequence belongs to the RuvA family. Homotetramer. Forms an RuvA(8)-RuvB(12)-Holliday junction (HJ) complex. HJ DNA is sandwiched between 2 RuvA tetramers; dsDNA enters through RuvA and exits via RuvB. An RuvB hexamer assembles on each DNA strand where it exits the tetramer. Each RuvB hexamer is contacted by two RuvA subunits (via domain III) on 2 adjacent RuvB subunits; this complex drives branch migration. In the full resolvosome a probable DNA-RuvA(4)-RuvB(12)-RuvC(2) complex forms which resolves the HJ.

It is found in the cytoplasm. The RuvA-RuvB-RuvC complex processes Holliday junction (HJ) DNA during genetic recombination and DNA repair, while the RuvA-RuvB complex plays an important role in the rescue of blocked DNA replication forks via replication fork reversal (RFR). RuvA specifically binds to HJ cruciform DNA, conferring on it an open structure. The RuvB hexamer acts as an ATP-dependent pump, pulling dsDNA into and through the RuvAB complex. HJ branch migration allows RuvC to scan DNA until it finds its consensus sequence, where it cleaves and resolves the cruciform DNA. This chain is Holliday junction branch migration complex subunit RuvA, found in Streptococcus pyogenes serotype M1.